A 431-amino-acid polypeptide reads, in one-letter code: Glutamate--tRNA ligase 1 (431 aa).

The 'HIGH' region motif lies at 11 to 21 (PSPTGDLHLGG). The short motif at 203 to 207 (KLSKR) is the 'KMSKS' region element. ATP is bound at residue Lys-206.

Belongs to the class-I aminoacyl-tRNA synthetase family. Glutamate--tRNA ligase type 1 subfamily. As to quaternary structure, monomer.

Its subcellular location is the cytoplasm. It catalyses the reaction tRNA(Glu) + L-glutamate + ATP = L-glutamyl-tRNA(Glu) + AMP + diphosphate. In terms of biological role, catalyzes the attachment of glutamate to tRNA(Glu) in a two-step reaction: glutamate is first activated by ATP to form Glu-AMP and then transferred to the acceptor end of tRNA(Glu). The polypeptide is Glutamate--tRNA ligase 1 (Rubrobacter xylanophilus (strain DSM 9941 / JCM 11954 / NBRC 16129 / PRD-1)).